The chain runs to 381 residues: Putative F-box/kelch-repeat protein At3g17570 (381 aa).

The 45-residue stretch at 1 to 45 (MFTDLPRDLETEILSRVPATSLQKLKPTCKRWYTLFKDPEFLKKH) folds into the F-box domain. 3 Kelch repeats span residues 151-199 (SYKI…TLKG), 229-281 (LLYQ…KIVE), and 331-379 (RFYI…GGKR).

In Arabidopsis thaliana (Mouse-ear cress), this protein is Putative F-box/kelch-repeat protein At3g17570.